A 186-amino-acid chain; its full sequence is uncharacterized protein (186 aa).

3 consecutive transmembrane segments (helical) span residues 42 to 62 (ISIAISVFSVIGTIVIALSVL), 80 to 100 (LLFLLNGIATAFLTLYGIGLV), and 131 to 151 (ICGIFLIMGEALCSVTSFIVL).

It to U.parvum UU008, UU041 and UU042.

It localises to the cell membrane. This is an uncharacterized protein from Ureaplasma parvum serovar 3 (strain ATCC 700970).